A 124-amino-acid chain; its full sequence is Ragulator complex protein LAMTOR3 homolog (124 aa).

The protein belongs to the LAMTOR3 family. As to quaternary structure, part of the Ragulator complex composed of Lamtor3, Lamtor2, CG14184, CG14812, and Lamtor4.

In terms of biological role, regulator of the TOR pathway, a signaling cascade that promotes cell growth in response to growth factors, energy levels, and amino acids. As part of the Ragulator complex, may activate the TOR signaling cascade in response to amino acids. The protein is Ragulator complex protein LAMTOR3 homolog of Drosophila melanogaster (Fruit fly).